The chain runs to 83 residues: Alpha-neurotoxin NTX-1 (83 aa).

A signal peptide spans 1–21 (MKTLLLTLLVVTIVCLDLGYT). Cystine bridges form between Cys24–Cys45, Cys38–Cys62, Cys64–Cys75, and Cys76–Cys81.

This sequence belongs to the three-finger toxin family. Short-chain subfamily. Type I alpha-neurotoxin sub-subfamily. In terms of tissue distribution, expressed by the venom gland.

Its subcellular location is the secreted. In terms of biological role, binds to muscle nicotinic acetylcholine receptor (nAChR) and inhibit acetylcholine from binding to the receptor, thereby impairing neuromuscular transmission. The protein is Alpha-neurotoxin NTX-1 of Naja sputatrix (Malayan spitting cobra).